Reading from the N-terminus, the 393-residue chain is Formate-dependent phosphoribosylglycinamide formyltransferase (393 aa).

Residues 22–23 (EL) and glutamate 82 contribute to the N(1)-(5-phospho-beta-D-ribosyl)glycinamide site. Residues arginine 114, lysine 155, 160-165 (SSGKGQ), 195-198 (EGFI), and glutamate 203 each bind ATP. The 190-residue stretch at 119 to 308 (RLAAEELGLP…EFALHARAIL (190 aa)) folds into the ATP-grasp domain. Glutamate 267 and glutamate 279 together coordinate Mg(2+). Residues aspartate 286, lysine 356, and 363–364 (RR) contribute to the N(1)-(5-phospho-beta-D-ribosyl)glycinamide site.

It belongs to the PurK/PurT family. In terms of assembly, homodimer.

It carries out the reaction N(1)-(5-phospho-beta-D-ribosyl)glycinamide + formate + ATP = N(2)-formyl-N(1)-(5-phospho-beta-D-ribosyl)glycinamide + ADP + phosphate + H(+). Its pathway is purine metabolism; IMP biosynthesis via de novo pathway; N(2)-formyl-N(1)-(5-phospho-D-ribosyl)glycinamide from N(1)-(5-phospho-D-ribosyl)glycinamide (formate route): step 1/1. Functionally, involved in the de novo purine biosynthesis. Catalyzes the transfer of formate to 5-phospho-ribosyl-glycinamide (GAR), producing 5-phospho-ribosyl-N-formylglycinamide (FGAR). Formate is provided by PurU via hydrolysis of 10-formyl-tetrahydrofolate. The protein is Formate-dependent phosphoribosylglycinamide formyltransferase of Stutzerimonas stutzeri (strain A1501) (Pseudomonas stutzeri).